The chain runs to 568 residues: Zinc finger protein 76 (568 aa).

Lys-24 participates in a covalent cross-link: Glycyl lysine isopeptide (Lys-Gly) (interchain with G-Cter in SUMO2). A run of 3 repeats spans residues 34–45 (IQLEDGTTAYIH), 62–73 (VQLEDGSMAYIH), and 88–99 (VQLEDGSTAYIH). The 3 X 12 AA approximate repeats stretch occupies residues 34-99 (IQLEDGTTAY…LEDGSTAYIH (66 aa)). C2H2-type zinc fingers lie at residues 165-189 (FRCGYKGCGRLYTTAHHLKVHERAH), 195-219 (YRCDFPSCGKAFATGYGLKSHVRTH), 225-249 (YKCPEELCSKAFKTSGDLQKHVRTH), 255-279 (FRCPFEGCGRSFTTSNIRKVHVRTH), 285-309 (YTCPEPHCGRGFTSATNYKNHVRIH), 315-339 (YVCTVPGCGKRFTEYSSLYKHHVVH), and 345-368 (YTCSSCGKTYRQTSTLAMHKRSAH). Residues 365-401 (RSAHGELEATEESEQALYEQQQLEAASAAEESPSPKP) form a disordered region. The segment covering 379 to 396 (QALYEQQQLEAASAAEES) has biased composition (low complexity).

Belongs to the krueppel C2H2-type zinc-finger protein family.

Its subcellular location is the nucleus. In terms of biological role, may be involved in transcriptional regulation. The protein is Zinc finger protein 76 (Znf76) of Rattus norvegicus (Rat).